The following is a 206-amino-acid chain: MARYLGPKLKLSRREGTDLFLKSGVRAIDTKCKIGQAPGQHGARKPRLSDYGVQLREKQKVRRIYGVLERQFRNYYKEAARLKGNTGENLLALLEGRLDNVVYRMGFGATRAEARQLVSHKAIMVNGRVVNIASYQVSPNDVVSIREKAKKQSRVKAALELAEQREKPTWLEVDAGKMEGTYKRKPERSDLSADINEHLIVELYSK.

Residues 96-156 enclose the S4 RNA-binding domain; the sequence is GRLDNVVYRM…EKAKKQSRVK (61 aa).

The protein belongs to the universal ribosomal protein uS4 family. Part of the 30S ribosomal subunit. Contacts protein S5. The interaction surface between S4 and S5 is involved in control of translational fidelity.

One of the primary rRNA binding proteins, it binds directly to 16S rRNA where it nucleates assembly of the body of the 30S subunit. Functionally, with S5 and S12 plays an important role in translational accuracy. The polypeptide is Small ribosomal subunit protein uS4 (Salmonella typhi).